The chain runs to 262 residues: Thiazole synthase (262 aa).

The Schiff-base intermediate with DXP role is filled by K97. 1-deoxy-D-xylulose 5-phosphate-binding positions include G158, 185 to 186 (AG), and 207 to 208 (NT). The interval 243–262 (DKAQASTPTVGQPFWHSAEY) is disordered.

The protein belongs to the ThiG family. As to quaternary structure, homotetramer. Forms heterodimers with either ThiH or ThiS.

Its subcellular location is the cytoplasm. It carries out the reaction [ThiS sulfur-carrier protein]-C-terminal-Gly-aminoethanethioate + 2-iminoacetate + 1-deoxy-D-xylulose 5-phosphate = [ThiS sulfur-carrier protein]-C-terminal Gly-Gly + 2-[(2R,5Z)-2-carboxy-4-methylthiazol-5(2H)-ylidene]ethyl phosphate + 2 H2O + H(+). It participates in cofactor biosynthesis; thiamine diphosphate biosynthesis. Functionally, catalyzes the rearrangement of 1-deoxy-D-xylulose 5-phosphate (DXP) to produce the thiazole phosphate moiety of thiamine. Sulfur is provided by the thiocarboxylate moiety of the carrier protein ThiS. In vitro, sulfur can be provided by H(2)S. The chain is Thiazole synthase from Neisseria meningitidis serogroup C (strain 053442).